The following is a 120-amino-acid chain: C-type natriuretic peptide 4 (120 aa).

The signal sequence occupies residues 1–22; it reads MNLSYLVACGLMITLLSVRMGA. The propeptide occupies 23 to 96; it reads KPLSQAQQKS…PRRHKTGIKK (74 aa). C104 and C120 are disulfide-bonded.

The protein belongs to the natriuretic peptide family.

It localises to the secreted. Its function is as follows. Exhibits natriuretic and vasodepressant activity. Has cGMP-stimulating activity. May help to regulate body fluid homeostasis in a variety of aquatic environments. This Takifugu rubripes (Japanese pufferfish) protein is C-type natriuretic peptide 4.